A 123-amino-acid polypeptide reads, in one-letter code: ATP synthase epsilon chain (123 aa).

The protein belongs to the ATPase epsilon chain family. In terms of assembly, F-type ATPases have 2 components, CF(1) - the catalytic core - and CF(0) - the membrane proton channel. CF(1) has five subunits: alpha(3), beta(3), gamma(1), delta(1), epsilon(1). CF(0) has three main subunits: a, b and c.

The protein resides in the cell inner membrane. Its function is as follows. Produces ATP from ADP in the presence of a proton gradient across the membrane. The protein is ATP synthase epsilon chain of Helicobacter pylori (strain Shi470).